Consider the following 1663-residue polypeptide: Complement C3 (1663 aa).

An N-terminal signal peptide occupies residues 1–24 (MGPASGSQLLVLLLLLASSPLALG). Ser40 carries the post-translational modification Phosphoserine. 13 disulfides stabilise this stretch: Cys559–Cys816, Cys626–Cys661, Cys693–Cys720, Cys694–Cys727, Cys707–Cys728, Cys873–Cys1513, Cys1101–Cys1158, Cys1358–Cys1489, Cys1389–Cys1458, Cys1506–Cys1511, Cys1518–Cys1590, Cys1537–Cys1661, and Cys1637–Cys1646. Ser671 is subject to Phosphoserine. An Anaphylatoxin-like domain is found at 693-728 (CCEDGMRDIPMRYSCQRRARLITQGENCIKAFIDCC). N-linked (GlcNAc...) asparagine glycosylation is present at Asn939. Ser968 is modified (phosphoserine). The segment at residues 1010-1013 (CGEQ) is a cross-link (isoglutamyl cysteine thioester (Cys-Gln)). A Phosphoserine modification is found at Ser1321. The region spanning 1518-1661 (CFMQQSQEKI…FTESMVVYGC (144 aa)) is the NTR domain. A Phosphoserine modification is found at Ser1573. N-linked (GlcNAc...) asparagine glycosylation occurs at Asn1617. The tract at residues 1634–1659 (AEECQDQKYQKQCEELGAFTESMVVY) is interaction with CFP/properdin.

In terms of assembly, in absence of complement activation, the C3 precursor is first processed by the removal of 4 Arg residues, forming two chains, beta and alpha, linked by a disulfide bond. Complement C3b is composed of complement C3b and complement C3 beta chains that are associated via disulfide bonds. Non-enzymatic component of the C5 convertase, also named C4bC2bC3b, composed of the serine protease complement C2b (C2), complement C3b, as well as complement C4b (C4). Non-enzymatic component of the C5 convertase of the alternative complement pathways composed of the serine protease complement CFB and complement C3b. Interacts with CFP; interaction takes place together with CFB in the alternative complement system and allows the complex to become active. Interacts with CR1 (via Sushi 8 and Sushi 9 domains). Interacts with CFH. As to quaternary structure, interacts with CFH. Interacts with CR2. In terms of assembly, during pregnancy, C3dg exists as a complex (probably a 2:2:2 heterohexamer) with AGT and the proform of PRG2. Interacts with CR2 (via the N-terminal Sushi domains 1 and 2). C3 precursor is first processed by the removal of 4 Arg residues, forming two chains, beta and alpha, linked by a disulfide bond. During activation of the complement systems, the alpha chain is cleaved into C3a and C3b by the C3 convertase: C3b stays linked to the beta chain, while C3a is released in the plasma. The alpha chain is cleaved by the serine protease complement C2b component of the C3 convertase to generate C3a and C3b following activation by the classical, lectin and GZMK complement systems. The alpha chain is cleaved by CFB component of the C3 convertase to generate C3a and C3b following activation by the alternative complement system. In terms of processing, C3a is further processed by carboxypeptidases to release the C-terminal arginine residue generating the acylation stimulating protein (ASP). Levels of ASP are increased in adipocytes in the postprandial period and by insulin and dietary chylomicrons. Post-translationally, complement C3b is rapidly split in two positions by factor I (CFI) and a cofactor (CFH) to form iC3b (inactivated C3b) and C3f which is released. CFI and CFH catalyze proteolytic degradation of already-deposited complement C3b. Then iC3b is slowly cleaved (possibly by CFI) to form C3c (beta chain + alpha' chain fragment 1 + alpha' chain fragment 2), C3dg and C3f. Other proteases produce other fragments such as C3d or C3g. Upon activation, the internal thioester bond reacts with carbohydrate antigens on the target surface to form amide or ester bonds, leading to covalent association with the surface of pathogens. In terms of processing, complement C3b interacts with complement C4b via a thioester linkage. Post-translationally, phosphorylated by FAM20C in the extracellular medium.

It is found in the secreted. The protein localises to the cell surface. With respect to regulation, complement activation is inhibited by VSIG4. In terms of biological role, precursor of non-enzymatic components of the classical, alternative, lectin and GZMK complement pathways, which consist in a cascade of proteins that leads to phagocytosis and breakdown of pathogens and signaling that strengthens the adaptive immune system. Non-enzymatic component of C5 convertase. Generated following cleavage by C3 convertase, it covalently attaches to the surface of pathogens, where it acts as an opsonin that marks the surface of antigens for removal. Complement C3b binds covalently via its reactive thioester, to cell surface carbohydrates or immune aggregates. Together with complement C4b, it then recruits the serine protease complement C2b to form the C5 convertase, which cleaves and activate C5, the next component of the complement pathways. In the alternative complement pathway, recruits the serine protease CFB to form the C5 convertase that cleaves and activates C5. Functionally, mediator of local inflammatory process released following cleavage by C3 convertase. Acts by binding to its receptor, C3AR1, activating G protein-coupled receptor signaling, promoting the phosphorylation, ARRB2-mediated internalization and endocytosis of C3AR1. C3a anaphylatoxin stimulates the activation of immune cells such as mast cells and basophilic leukocytes to release inflammation agents, such as cytokines, chemokines and histamine, which promote inflammation development. Also acts as potent chemoattractant for the migration of macrophages and neutrophils to the inflamed tissues, resulting in neutralization of the inflammatory triggers by multiple ways, such as phagocytosis and generation of reactive oxidants. Its function is as follows. Adipogenic hormone that stimulates triglyceride synthesis and glucose transport in adipocytes, regulating fat storage and playing a role in postprandial triglyceride clearance. Appears to stimulate triglyceride synthesis via activation of the PLC, MAPK and AKT signaling pathways. Acts by binding to its receptor, C5AR2, activating G protein-coupled receptor signaling, promoting the phosphorylation, ARRB2-mediated internalization and endocytosis of C5AR2. In terms of biological role, acts as a chemoattractant for neutrophils in chronic inflammation. The protein is Complement C3 of Mus musculus (Mouse).